A 125-amino-acid chain; its full sequence is Small ribosomal subunit protein bS6 (125 aa).

The interval 100–125 (SPMVKAREERKPLTEVENNDFEDAEE) is disordered. The span at 104-113 (KAREERKPLT) shows a compositional bias: basic and acidic residues. The span at 116 to 125 (ENNDFEDAEE) shows a compositional bias: acidic residues.

Belongs to the bacterial ribosomal protein bS6 family.

Binds together with bS18 to 16S ribosomal RNA. This Histophilus somni (strain 129Pt) (Haemophilus somnus) protein is Small ribosomal subunit protein bS6.